We begin with the raw amino-acid sequence, 323 residues long: L-lactate dehydrogenase (323 aa).

Residues valine 18, aspartate 39, arginine 44, tyrosine 69, and 83–84 each bind NAD(+); that span reads GA. Glutamine 86 and arginine 92 together coordinate substrate. NAD(+) is bound by residues threonine 105, 122-124, and serine 147; that span reads AAN. A substrate-binding site is contributed by 124–127; sequence NPVD. A substrate-binding site is contributed by 152–155; sequence DTAR. Histidine 179 serves as the catalytic Proton acceptor. Tyrosine 223 carries the phosphotyrosine modification. Position 232 (threonine 232) interacts with substrate.

Belongs to the LDH/MDH superfamily. LDH family. In terms of assembly, homotetramer.

Its subcellular location is the cytoplasm. It carries out the reaction (S)-lactate + NAD(+) = pyruvate + NADH + H(+). Its pathway is fermentation; pyruvate fermentation to lactate; (S)-lactate from pyruvate: step 1/1. Functionally, catalyzes the conversion of lactate to pyruvate. This chain is L-lactate dehydrogenase, found in Pediococcus acidilactici.